The primary structure comprises 103 residues: Iron-sulfur cluster assembly protein CyaY (103 aa).

Belongs to the frataxin family.

In terms of biological role, involved in iron-sulfur (Fe-S) cluster assembly. May act as a regulator of Fe-S biogenesis. This Rickettsia africae (strain ESF-5) protein is Iron-sulfur cluster assembly protein CyaY.